The sequence spans 509 residues: Maturase K (509 aa).

It belongs to the intron maturase 2 family. MatK subfamily.

It is found in the plastid. Its subcellular location is the chloroplast. Usually encoded in the trnK tRNA gene intron. Probably assists in splicing its own and other chloroplast group II introns. This chain is Maturase K, found in Cicer arietinum (Chickpea).